The primary structure comprises 360 residues: Peptide chain release factor 1 (360 aa).

At Gln-235 the chain carries N5-methylglutamine. The segment covering 284–293 (QRRQQEESST) has biased composition (basic and acidic residues). A disordered region spans residues 284–311 (QRRQQEESSTRRNLLGSGDRSDRIRTYN).

The protein belongs to the prokaryotic/mitochondrial release factor family. Methylated by PrmC. Methylation increases the termination efficiency of RF1.

The protein resides in the cytoplasm. Functionally, peptide chain release factor 1 directs the termination of translation in response to the peptide chain termination codons UAG and UAA. In Sodalis glossinidius (strain morsitans), this protein is Peptide chain release factor 1.